The chain runs to 384 residues: Galactokinase (384 aa).

34–37 (EHTD) provides a ligand contact to substrate. Position 123–129 (123–129 (SSGLSSS)) interacts with ATP. The Mg(2+) site is built by S129 and E161. D173 acts as the Proton acceptor in catalysis. Y222 is a binding site for substrate.

It belongs to the GHMP kinase family. GalK subfamily.

It localises to the cytoplasm. It catalyses the reaction alpha-D-galactose + ATP = alpha-D-galactose 1-phosphate + ADP + H(+). It participates in carbohydrate metabolism; galactose metabolism. In terms of biological role, catalyzes the transfer of the gamma-phosphate of ATP to D-galactose to form alpha-D-galactose-1-phosphate (Gal-1-P). This chain is Galactokinase, found in Haemophilus influenzae (strain PittEE).